A 288-amino-acid polypeptide reads, in one-letter code: Probable endonuclease 4 (288 aa).

Positions 75, 115, 153, 187, 190, 224, 237, 239, and 269 each coordinate Zn(2+).

This sequence belongs to the AP endonuclease 2 family. It depends on Zn(2+) as a cofactor.

The enzyme catalyses Endonucleolytic cleavage to 5'-phosphooligonucleotide end-products.. In terms of biological role, endonuclease IV plays a role in DNA repair. It cleaves phosphodiester bonds at apurinic or apyrimidinic (AP) sites, generating a 3'-hydroxyl group and a 5'-terminal sugar phosphate. The polypeptide is Probable endonuclease 4 (Chlamydia trachomatis serovar L2 (strain ATCC VR-902B / DSM 19102 / 434/Bu)).